The following is a 721-amino-acid chain: 1,4-alpha-glucan branching enzyme GlgB (721 aa).

The active-site Nucleophile is the Asp404. Residue Glu457 is the Proton donor of the active site.

It belongs to the glycosyl hydrolase 13 family. GlgB subfamily. In terms of assembly, monomer.

The enzyme catalyses Transfers a segment of a (1-&gt;4)-alpha-D-glucan chain to a primary hydroxy group in a similar glucan chain.. It participates in glycan biosynthesis; glycogen biosynthesis. Its function is as follows. Catalyzes the formation of the alpha-1,6-glucosidic linkages in glycogen by scission of a 1,4-alpha-linked oligosaccharide from growing alpha-1,4-glucan chains and the subsequent attachment of the oligosaccharide to the alpha-1,6 position. This is 1,4-alpha-glucan branching enzyme GlgB from Novosphingobium aromaticivorans (strain ATCC 700278 / DSM 12444 / CCUG 56034 / CIP 105152 / NBRC 16084 / F199).